We begin with the raw amino-acid sequence, 80 residues long: UPF0154 protein SaurJH1_1431 (80 aa).

Residues 4-24 traverse the membrane as a helical segment; it reads WLAIIFIVAALILGLIGGFLL.

This sequence belongs to the UPF0154 family.

It localises to the cell membrane. The sequence is that of UPF0154 protein SaurJH1_1431 from Staphylococcus aureus (strain JH1).